The sequence spans 607 residues: DNA mismatch repair protein MutL (607 aa).

A disordered region spans residues 374 to 411; that stretch reads RTEAGNEHVPSANRIQPPDPSIDMPDEPVPEQTDEPVA. Positions 397-407 are enriched in acidic residues; it reads MPDEPVPEQTD.

This sequence belongs to the DNA mismatch repair MutL/HexB family.

In terms of biological role, this protein is involved in the repair of mismatches in DNA. It is required for dam-dependent methyl-directed DNA mismatch repair. May act as a 'molecular matchmaker', a protein that promotes the formation of a stable complex between two or more DNA-binding proteins in an ATP-dependent manner without itself being part of a final effector complex. The polypeptide is DNA mismatch repair protein MutL (Exiguobacterium sibiricum (strain DSM 17290 / CCUG 55495 / CIP 109462 / JCM 13490 / 255-15)).